A 194-amino-acid chain; its full sequence is dITP/XTP pyrophosphatase (194 aa).

7-12 (SGNVNK) contributes to the substrate binding site. Glutamate 38 and aspartate 67 together coordinate Mg(2+). Aspartate 67 acts as the Proton acceptor in catalysis. Residues serine 68, 151 to 154 (FGYD), lysine 174, and 179 to 180 (HR) each bind substrate.

Belongs to the HAM1 NTPase family. Homodimer. Requires Mg(2+) as cofactor.

The enzyme catalyses XTP + H2O = XMP + diphosphate + H(+). The catalysed reaction is dITP + H2O = dIMP + diphosphate + H(+). It carries out the reaction ITP + H2O = IMP + diphosphate + H(+). Its function is as follows. Pyrophosphatase that catalyzes the hydrolysis of nucleoside triphosphates to their monophosphate derivatives, with a high preference for the non-canonical purine nucleotides XTP (xanthosine triphosphate), dITP (deoxyinosine triphosphate) and ITP. Seems to function as a house-cleaning enzyme that removes non-canonical purine nucleotides from the nucleotide pool, thus preventing their incorporation into DNA/RNA and avoiding chromosomal lesions. The polypeptide is dITP/XTP pyrophosphatase (Treponema denticola (strain ATCC 35405 / DSM 14222 / CIP 103919 / JCM 8153 / KCTC 15104)).